A 959-amino-acid chain; its full sequence is MKKFFDSRREQGSSGLGSGSSGGGGSSSGLGSGYIGRVFGIGRQQVTVDEVLAEGGFALVFLVRTSNGVKCALKRMFVNNEHDLQVCKREIQIMRDLSGHKNIVGYIDSSINNVSSGDVWEVLILMDFCRGGQVVNLMNQRLQTGFTENEVLQIFCDTCEAVARLHQCKTPIIHRDLKVENILLHDRGHYVLCDFGSATNKFQNPQAEGVNAVEDEIKKYTTLSYRAPEMVNLYSGKIITTKADIWALGCLLYKLCYFTLPFGESQVAICDGSFTIPDNSRYSQDMHCLIRYMLEPDPDKRPDIYQVSYFSFKLLKKECPVPNVQNSPIPAKLPEPVKASEAAVKKTQPKARLTDPIPTTETSIAPRQRPKAGQTQPNPGILPIQPALTPRKRATVQPLPQAAGPSNQPGLLPSVSQPKAQATPSQPLQSSQPKQPQAPPTPQQTPATQTQGLPTQAQATPQHQQQHLLKQQQQQQQQPQQPTAPPQPAGTFYQQQQQQQQQQAQTQQFQAVHPAAQQPVTAQFPVGSQGGAQQQLMQNFYHQQQQQQQQQQQLMAQQAALQQKTAVVVPQSQAQPATAPQAAAAQEPGQIQAPVRQQPKVQTTPPPTIQGQKVGSLTPPSSPKTQRAGHRRILSDVTHSAVFGVPASKSTQLLQAAAAEASLNKSKSATTTPSGSPRTSQQNVSNASEGSTWNPFDDDNFSKLTAEELLNKDFAKLGEGKLPEKLGGSAESLIPGFQPTQGDAFTTPSFSAGTAEKRKGGQAVDSGIPLLSVSDPFIPLQVPDAPEKLIEGLKSPDTSLLLPDLLPMTDPFGSTSDAVIDKADVAVESLIPGLEPPVAQRLPSQTESVTSNRTDSLTGEDSLLDCSLLSNPTAGLLEEFAPIALSAPTHKAAEDSNLISGFGVAEGSEKVAEDEFDPIPVLITKNTQGGHSRNSSGSSESSLPNLARSLLLVDQLIDL.

Residue M1 is modified to N-acetylmethionine. The segment covering 1–11 has biased composition (basic and acidic residues); the sequence is MKKFFDSRREQ. The disordered stretch occupies residues 1–27; sequence MKKFFDSRREQGSSGLGSGSSGGGGSS. S14 is subject to Phosphoserine. Gly residues predominate over residues 14 to 27; it reads SGLGSGSSGGGGSS. In terms of domain architecture, Protein kinase spans 46–315; that stretch reads VTVDEVLAEG…QVSYFSFKLL (270 aa). Residues 52 to 60 and K74 each bind ATP; that span reads LAEGGFALV. The active-site Proton acceptor is the D176. Y234 is modified (phosphotyrosine). At S235 the chain carries Phosphoserine. The disordered stretch occupies residues 340–385; that stretch reads SEAAVKKTQPKARLTDPIPTTETSIAPRQRPKAGQTQPNPGILPIQ. T354 and T389 each carry phosphothreonine. R391 carries the post-translational modification Omega-N-methylarginine. Disordered stretches follow at residues 398-514 and 578-630; these read PLPQ…AVHP and TAPQ…RAGH. Residues 404 to 419 show a composition bias toward polar residues; that stretch reads GPSNQPGLLPSVSQPK. A compositionally biased stretch (low complexity) spans 420 to 435; that stretch reads AQATPSQPLQSSQPKQ. T441 carries the post-translational modification Phosphothreonine. 3 stretches are compositionally biased toward low complexity: residues 444-481, 494-510, and 578-603; these read QTPATQTQGLPTQAQATPQHQQQHLLKQQQQQQQQPQQ, QQQQQQQQQQAQTQQFQ, and TAPQAAAAQEPGQIQAPVRQQPKVQT. Residue T604 is modified to Phosphothreonine. Polar residues predominate over residues 609–625; that stretch reads IQGQKVGSLTPPSSPKT. Residue S616 is modified to Phosphoserine. At T618 the chain carries Phosphothreonine. S621, S622, S635, and S648 each carry phosphoserine. Position 651 is a phosphothreonine (T651). Disordered regions lie at residues 662-699, 727-763, 837-857, and 923-943; these read SLNKSKSATTTPSGSPRTSQQNVSNASEGSTWNPFDDD, GGSAESLIPGFQPTQGDAFTTPSFSAGTAEKRKGGQA, PVAQRLPSQTESVTSNRTDSL, and ITKNTQGGHSRNSSGSSESSL. A compositionally biased stretch (polar residues) spans 670 to 694; it reads TTTPSGSPRTSQQNVSNASEGSTWN. At S729 the chain carries Phosphoserine. Polar residues-rich tracts occupy residues 738 to 752 and 842 to 857; these read QPTQGDAFTTPSFSA and LPSQTESVTSNRTDSL. A clathrin-binding domain (CBD) region spans residues 821–958; sequence DKADVAVESL…SLLLVDQLID (138 aa). 3 positions are modified to phosphoserine: S844, S935, and S936. Residues 929-942 are compositionally biased toward low complexity; it reads GGHSRNSSGSSESS.

It belongs to the protein kinase superfamily. Ser/Thr protein kinase family. Interacts (via CBD domain) with clathrin. Interacts with AP-2 complex. Interacts with NUMB. Interacts with alpha-adaptin. Interacts with EPS15 isoform 2. Interacts with membrane-bound activated NOTCH1 but not with the inactive full-length form of NOTCH1. Preferentially interacts with monoubiquitinated activated NOTCH1 compared to the non-ubiquitinated form. Autophosphorylated.

The protein resides in the cell membrane. The protein localises to the membrane. Its subcellular location is the clathrin-coated pit. It localises to the presynapse. It carries out the reaction L-seryl-[protein] + ATP = O-phospho-L-seryl-[protein] + ADP + H(+). It catalyses the reaction L-threonyl-[protein] + ATP = O-phospho-L-threonyl-[protein] + ADP + H(+). Its activity is regulated as follows. Stimulated by clathrin. In terms of biological role, regulates clathrin-mediated endocytosis by phosphorylating the AP2M1/mu2 subunit of the adaptor protein complex 2 (AP-2) which ensures high affinity binding of AP-2 to cargo membrane proteins during the initial stages of endocytosis. Preferentially, may phosphorylate substrates on threonine residues. Regulates phosphorylation of other AP-2 subunits as well as AP-2 localization and AP-2-mediated internalization of ligand complexes. Phosphorylates NUMB and regulates its cellular localization, promoting NUMB localization to endosomes. Binds to and stabilizes the activated form of NOTCH1, increases its localization in endosomes and regulates its transcriptional activity. The polypeptide is AP2-associated protein kinase 1 (Aak1) (Mus musculus (Mouse)).